Reading from the N-terminus, the 75-residue chain is Protein SlyX homolog (75 aa).

This sequence belongs to the SlyX family.

This chain is Protein SlyX homolog, found in Vibrio atlanticus (strain LGP32) (Vibrio splendidus (strain Mel32)).